The chain runs to 263 residues: Ribosomal RNA small subunit methyltransferase J (263 aa).

Residues 115-116, 131-132, and Asp-181 contribute to the S-adenosyl-L-methionine site; these read RD and ER.

Belongs to the methyltransferase superfamily. RsmJ family.

It localises to the cytoplasm. It catalyses the reaction guanosine(1516) in 16S rRNA + S-adenosyl-L-methionine = N(2)-methylguanosine(1516) in 16S rRNA + S-adenosyl-L-homocysteine + H(+). Its function is as follows. Specifically methylates the guanosine in position 1516 of 16S rRNA. The chain is Ribosomal RNA small subunit methyltransferase J from Hahella chejuensis (strain KCTC 2396).